The sequence spans 1330 residues: MGTASSLVSPAGGEVIEDTYGAGGGEACEIPVEVKPKARLLRNSFRRGAGAAAGAGPGSLPRGVGAGGLLGASFKSTGSSVPELEYAAAEYERLRKEYEIFRVSKNQELLSMGRREAKLDTENKRLRAELQALQKTYQKILREKESALEAKYQAMERAATFEHDRDKVKRQFKIFRETKENEIQDLLRAKRELESKLQRLQAQGIQVFDPGESDSDDNCTDVTAAGTQCEYWTGGALGSEPSIGSMIQLQQSFRGPEFAHSSIDVEGPFANVNRDDWDIAVASLLQVTPLFSHSLWSNTVRCYLIYTDETQPEMDLFLKDYSPKLKRMCETMGYFFHAVYFPIDVENQYLTVRKWEIEKSSLVILFIHLTLPSLLLEDCEEAFLKNPEGKPRLIFHRLEDGKVSSDSVQQLIDQVSNLNKTSKAKIIDHSGDPAEGVYKTYICVEKIIKQDILGFENTDLETKDLGSEDSIPEEDDFGDVLWDIHDEQEQMETFQQASNSAHELGFEKYYQRLNDLVAAPAPIPPLLVSGGPGSGKSLLLSKWIQLQQKNSPNTLILSHFVGRPMSTSSESSLIIKRLTLKLMQHSWSVSALTLDPAKLLEEFPRWLEKLSARHQGSIIIVIDSIDQVQQVEKHMKWLIDPLPVNVRVIVSVNVETCPPAWRLWPTLHLDPLSPKDAKSIIIAECHSVDIKLSKEQEKKLERHCRSATTCNALYVTLFGKMIARAGRAGNLDKILHQCFQCQDTLSLYRLVLHSIRESMANDVDKELMKQILCLVNVSHNGVSESELMELYPEMSWTFLTSLIHSLYKMCLLTYGCGLLRFQHLQAWETVRLEYLEGPTVTSSYRQKLINYFTLQLSQDRVTWRSADELPWLFQQQGSKQKLHDCLLNLFVSQNLYKRGHFAELLSYWQFVGKDKSAMATEYFDSLKQYEKNCEGEDNMSCLADLYETLGRFLKDLGLLSQAIVPLQRSLEIRETALDPDHPRVAQSLHQLASVYVQWKKFGNAEQLYKQALEISENAYGADHPYTARELEALATLYQKQNKYEQAEHFRKKSFKIHQKAIKKKGNLYGFALLRRRALQLEELTLGKDTPDNARTLNELGVLYYLQNNLETADQFLKRSLEMRERVLGPDHPDCAQSLNNLAALCNEKKQYDKAEELYERALDIRRRALAPDHPSLAYTVKHLAILYKKMGKLDKAVPLYELAVEIRQKSFGPKHPSVATALVNLAVLYSQMKKHVEALPLYERALKIYEDSLGRMHPRVGETLKNLAVLSYEGGDFEKAAELYKRAMEIKEAETSLLGGKAPSRHSSSGDTFSLKTAHSPNVFLQQGQR.

Gly2 carries the N-myristoyl glycine lipid modification. Residues 83-207 (ELEYAAAEYE…QRLQAQGIQV (125 aa)) adopt a coiled-coil conformation. TPR repeat units follow at residues 471-504 (IPEEDDFGDVLWDIHDEQEQMETFQQASNSAHEL), 885-918 (CLLNLFVSQNLYKRGHFAELLSYWQFVGKDKSAM), 920-942 (TEYFDSLKQYEKNCEGEDNMSCL), 943-976 (ADLYETLGRFLKDLGLLSQAIVPLQRSLEIRETA), 985-1018 (AQSLHQLASVYVQWKKFGNAEQLYKQALEISENA), 1027-1060 (ARELEALATLYQKQNKYEQAEHFRKKSFKIHQKA), 1093-1126 (ARTLNELGVLYYLQNNLETADQFLKRSLEMRERV), 1135-1168 (AQSLNNLAALCNEKKQYDKAEELYERALDIRRRA), 1177-1210 (AYTVKHLAILYKKMGKLDKAVPLYELAVEIRQKS), 1219-1252 (ATALVNLAVLYSQMKKHVEALPLYERALKIYEDS), and 1261-1294 (GETLKNLAVLSYEGGDFEKAAELYKRAMEIKEAE). Residues 1296-1330 (SLLGGKAPSRHSSSGDTFSLKTAHSPNVFLQQGQR) form a disordered region. Over residues 1305 to 1330 (RHSSSGDTFSLKTAHSPNVFLQQGQR) the composition is skewed to polar residues.

As to quaternary structure, interacts with NPHP1 and INVS/NPHP2. Interacts (when myristoylated) with UNC119 and UNC119B; interaction is required for localization to cilium. Interacts with CEP164. Component of a complex containing at least ANKS6, INVS, NEK8 and NPHP3. ANKS6 may organize complex assembly by linking INVS and NPHP3 to NEK8 and INVS may target the complex to the proximal ciliary axoneme. As to expression, widely expressed at low level. Expressed in heart, placenta, liver, skeletal muscle, kidney and pancreas. Expressed at very low level in brain and lung.

The protein resides in the cell projection. It localises to the cilium. In terms of biological role, required for normal ciliary development and function. Inhibits disheveled-1-induced canonical Wnt-signaling activity and may also play a role in the control of non-canonical Wnt signaling which regulates planar cell polarity. Probably acts as a molecular switch between different Wnt signaling pathways. Required for proper convergent extension cell movements. The polypeptide is Nephrocystin-3 (NPHP3) (Homo sapiens (Human)).